The chain runs to 443 residues: ATP-dependent protease ATPase subunit HslU (443 aa).

Residues isoleucine 18, 60-65, aspartate 256, glutamate 321, and arginine 393 contribute to the ATP site; that span reads GVGKTE.

It belongs to the ClpX chaperone family. HslU subfamily. In terms of assembly, a double ring-shaped homohexamer of HslV is capped on each side by a ring-shaped HslU homohexamer. The assembly of the HslU/HslV complex is dependent on binding of ATP.

The protein resides in the cytoplasm. In terms of biological role, ATPase subunit of a proteasome-like degradation complex; this subunit has chaperone activity. The binding of ATP and its subsequent hydrolysis by HslU are essential for unfolding of protein substrates subsequently hydrolyzed by HslV. HslU recognizes the N-terminal part of its protein substrates and unfolds these before they are guided to HslV for hydrolysis. This Escherichia coli O157:H7 (strain EC4115 / EHEC) protein is ATP-dependent protease ATPase subunit HslU.